The following is a 323-amino-acid chain: tRNA U34 carboxymethyltransferase (323 aa).

Carboxy-S-adenosyl-L-methionine is bound by residues lysine 91, tryptophan 105, lysine 110, glycine 130, 152 to 154 (DPT), 181 to 182 (IE), methionine 196, tyrosine 200, and arginine 315.

The protein belongs to the class I-like SAM-binding methyltransferase superfamily. CmoB family. In terms of assembly, homotetramer.

It carries out the reaction carboxy-S-adenosyl-L-methionine + 5-hydroxyuridine(34) in tRNA = 5-carboxymethoxyuridine(34) in tRNA + S-adenosyl-L-homocysteine + H(+). Catalyzes carboxymethyl transfer from carboxy-S-adenosyl-L-methionine (Cx-SAM) to 5-hydroxyuridine (ho5U) to form 5-carboxymethoxyuridine (cmo5U) at position 34 in tRNAs. In Escherichia coli O139:H28 (strain E24377A / ETEC), this protein is tRNA U34 carboxymethyltransferase.